The chain runs to 342 residues: Anthranilate phosphoribosyltransferase (342 aa).

5-phospho-alpha-D-ribose 1-diphosphate is bound by residues Gly90, 93-94 (GD), Thr98, 100-103 (NIST), 118-126 (KHGNRSVSS), and Ala130. Gly90 lines the anthranilate pocket. Ser102 contacts Mg(2+). Asn121 contributes to the anthranilate binding site. Arg176 is an anthranilate binding site. The Mg(2+) site is built by Asp234 and Glu235.

The protein belongs to the anthranilate phosphoribosyltransferase family. As to quaternary structure, homodimer. Mg(2+) serves as cofactor.

The enzyme catalyses N-(5-phospho-beta-D-ribosyl)anthranilate + diphosphate = 5-phospho-alpha-D-ribose 1-diphosphate + anthranilate. Its pathway is amino-acid biosynthesis; L-tryptophan biosynthesis; L-tryptophan from chorismate: step 2/5. Functionally, catalyzes the transfer of the phosphoribosyl group of 5-phosphorylribose-1-pyrophosphate (PRPP) to anthranilate to yield N-(5'-phosphoribosyl)-anthranilate (PRA). The protein is Anthranilate phosphoribosyltransferase of Mannheimia succiniciproducens (strain KCTC 0769BP / MBEL55E).